Reading from the N-terminus, the 510-residue chain is ATP synthase subunit alpha (510 aa).

Residue 169–176 participates in ATP binding; it reads GDRQTGKT.

Belongs to the ATPase alpha/beta chains family. In terms of assembly, F-type ATPases have 2 components, CF(1) - the catalytic core - and CF(0) - the membrane proton channel. CF(1) has five subunits: alpha(3), beta(3), gamma(1), delta(1), epsilon(1). CF(0) has four main subunits: a(1), b(1), b'(1) and c(9-12).

It localises to the cell inner membrane. It catalyses the reaction ATP + H2O + 4 H(+)(in) = ADP + phosphate + 5 H(+)(out). Functionally, produces ATP from ADP in the presence of a proton gradient across the membrane. The alpha chain is a regulatory subunit. The protein is ATP synthase subunit alpha of Rhodospirillum rubrum (strain ATCC 11170 / ATH 1.1.1 / DSM 467 / LMG 4362 / NCIMB 8255 / S1).